Reading from the N-terminus, the 218-residue chain is Sodium channel regulatory subunit beta-1 (218 aa).

Residues methionine 1 to tryptophan 18 form the signal peptide. Over glycine 19 to isoleucine 157 the chain is Extracellular. 2 disulfide bridges follow: cysteine 21–cysteine 43 and cysteine 40–cysteine 121. Residues valine 22–alanine 150 enclose the Ig-like C2-type domain. N-linked (GlcNAc...) asparagine glycosylation is found at asparagine 93, asparagine 110, asparagine 114, and asparagine 135. A helical transmembrane segment spans residues valine 158–valine 179. Topologically, residues tyrosine 180–glutamate 218 are cytoplasmic.

It belongs to the sodium channel auxiliary subunit SCN1B (TC 8.A.17) family. In terms of assembly, a voltage-gated sodium (Nav) channel consists of an ion-conducting pore-forming alpha subunit functional on its own that is regulated by one or more beta subunits. Interacts with SCN1A; regulatory subunit of SCN1A/Nav1.1. Interacts with SCN3A; regulatory subunit of SCN3A/Nav1.3. Interacts with SCN4A; regulatory subunit of SCN4A/Nav1.4. Interacts with SCN5A; regulatory subunit of SCN5A/Nav1.5. Interacts with SCN8A; regulatory subunit of SCN8A/Nav1.6. Interacts with SCN9A; regulatory subunit of SCN9A/Nav1.7. Interacts with SCN10A; regulatory subunit of SCN10A/Nav1.8. Interacts with NFASC. Interacts with TMEM65.

It localises to the cell membrane. Its subcellular location is the perikaryon. The protein resides in the cell projection. The protein localises to the axon. Regulatory subunit of multiple voltage-gated sodium (Nav) channels directly mediating the depolarization of excitable membranes. Navs, also called VGSCs (voltage-gated sodium channels) or VDSCs (voltage-dependent sodium channels), operate by switching between closed and open conformations depending on the voltage difference across the membrane. In the open conformation they allow Na(+) ions to selectively pass through the pore, along their electrochemical gradient. The influx of Na+ ions provokes membrane depolarization, initiating the propagation of electrical signals throughout cells and tissues. The accessory beta subunits participate in localization and functional modulation of the Nav channels. Modulates the activity of SCN1A/Nav1.1, SCN2A/Nav1.2, SCN3A/Nav1.3, SCN4A/Nav1.4, SCN5A/Nav1.5, SCN8A/Nav1.6, SCN9A/Nav1.7 and SCN10A/Nav1.8. The chain is Sodium channel regulatory subunit beta-1 from Canis lupus familiaris (Dog).